We begin with the raw amino-acid sequence, 501 residues long: Endonuclease domain-containing 1 protein (501 aa).

A signal peptide spans 1-21; it reads MGCARWLALGGLLALAGLLQA. Lys408 bears the N6-acetyllysine mark.

It belongs to the DNA/RNA non-specific endonuclease family. Interacts with RNF26; this interaction is important to modulate innate immune signaling through the cGAS-STING pathway.

Its subcellular location is the secreted. May act as a DNase and a RNase. Plays a role in the modulation of innate immune signaling through the cGAS-STING pathway by interacting with RNF26. This is Endonuclease domain-containing 1 protein (Endod1) from Mus musculus (Mouse).